Reading from the N-terminus, the 422-residue chain is 3-phosphoshikimate 1-carboxyvinyltransferase (422 aa).

3-phosphoshikimate-binding residues include K20, S21, and R25. Phosphoenolpyruvate is bound at residue K20. 2 residues coordinate phosphoenolpyruvate: G91 and R119. Positions 163, 164, 165, 305, 328, and 332 each coordinate 3-phosphoshikimate. Q165 provides a ligand contact to phosphoenolpyruvate. D305 (proton acceptor) is an active-site residue. R336 and R377 together coordinate phosphoenolpyruvate.

The protein belongs to the EPSP synthase family. As to quaternary structure, monomer.

The protein resides in the cytoplasm. It catalyses the reaction 3-phosphoshikimate + phosphoenolpyruvate = 5-O-(1-carboxyvinyl)-3-phosphoshikimate + phosphate. It functions in the pathway metabolic intermediate biosynthesis; chorismate biosynthesis; chorismate from D-erythrose 4-phosphate and phosphoenolpyruvate: step 6/7. Catalyzes the transfer of the enolpyruvyl moiety of phosphoenolpyruvate (PEP) to the 5-hydroxyl of shikimate-3-phosphate (S3P) to produce enolpyruvyl shikimate-3-phosphate and inorganic phosphate. This is 3-phosphoshikimate 1-carboxyvinyltransferase from Ruminiclostridium cellulolyticum (strain ATCC 35319 / DSM 5812 / JCM 6584 / H10) (Clostridium cellulolyticum).